A 396-amino-acid chain; its full sequence is 1-deoxy-D-xylulose 5-phosphate reductoisomerase (396 aa).

Residues T15, G16, S17, I18, G41, and N129 each coordinate NADPH. Residue K130 coordinates 1-deoxy-D-xylulose 5-phosphate. Position 131 (E131) interacts with NADPH. D155 provides a ligand contact to Mn(2+). The 1-deoxy-D-xylulose 5-phosphate site is built by S156, E157, S182, and H205. Position 157 (E157) interacts with Mn(2+). Residue G211 coordinates NADPH. 1-deoxy-D-xylulose 5-phosphate contacts are provided by S218, N223, K224, and E227. Mn(2+) is bound at residue E227.

It belongs to the DXR family. Requires Mg(2+) as cofactor. Mn(2+) is required as a cofactor.

The enzyme catalyses 2-C-methyl-D-erythritol 4-phosphate + NADP(+) = 1-deoxy-D-xylulose 5-phosphate + NADPH + H(+). It functions in the pathway isoprenoid biosynthesis; isopentenyl diphosphate biosynthesis via DXP pathway; isopentenyl diphosphate from 1-deoxy-D-xylulose 5-phosphate: step 1/6. Catalyzes the NADPH-dependent rearrangement and reduction of 1-deoxy-D-xylulose-5-phosphate (DXP) to 2-C-methyl-D-erythritol 4-phosphate (MEP). The protein is 1-deoxy-D-xylulose 5-phosphate reductoisomerase of Xanthomonas oryzae pv. oryzae (strain PXO99A).